Here is an 853-residue protein sequence, read N- to C-terminus: MSRFFAASDSSSEESSEEELYSDNEASAQEDSDKDSDDDDSDDDDSSSGSEAGGANRFLKDADSDSESEDEDQNKVLKSAKDKRFDELEATIRLIENAQRINDWAVISDQFDKLNRQAPTLMKQNDGKVPKLYIQAIADLETVVLETHEKQKVTPKKMNAVNTRGFNAVRQKVKKHNREFQKDIDLYRENKDEFMRETEEVEAAPKEKKKKSKIPQLGTEIVDEATDDGFITVGAGGKAVQYTPEGILKHLRAIVEQRGRKNSDKLEHIRTLEKLFDVSVNDYQRIRVLLTLISTRFDLTSGTASHMHQDQWKLADQEFGKLLEILENTKEIVVIENAEEWEDDDKLPPIEEGQIFRIPGSVVSFVERLDDELTRSLQHIDPHTAEYVERLTDEALLYAQLVRALIYVESLKKNASLELPQESLNRVVMRRLEHVYFKPSQVVTIMEANSWKAVPETLDSEVTPRAISNDTTSLVQTLSTYLFQNSEGIIRARAMLCQIYFLALHDQYYKARDMMLMSHLQETISNFDVNTQILFNRALVQVGLCAFRAGLVYESQNSLQEICGSNRQKELLAQGLQMQRYSQISPEQERLERQRQLPFHMHINLELLECVYLTCSMLLEIPLLAQLGSSPDLRKRVISKTYRRLLEYHERQIFTGPPENTRDHVMQASKALSAGEWKKAAEFINSIKIWELVADSEKIKEMLSAQIQEEGLRTYLFTYAPYYDTLAVSTLASMFELSERKVSAVVSKMISHEELAAALDQVNSAIIFRKGVELSRLQTLALSLSDKASGLIESNEKTLEQRTQGTANAFERQGGRGGRGGGRGRGGGRGGGVPRGGRNQQFTGGALGRAIQA.

A disordered region spans residues 1–78; that stretch reads MSRFFAASDS…EDEDQNKVLK (78 aa). Acidic residues predominate over residues 11–46; the sequence is SSEESSEEELYSDNEASAQEDSDKDSDDDDSDDDDS. In terms of domain architecture, PCI spans 599-773; the sequence is FHMHINLELL…SAIIFRKGVE (175 aa). The disordered stretch occupies residues 798–853; sequence TLEQRTQGTANAFERQGGRGGRGGGRGRGGGRGGGVPRGGRNQQFTGGALGRAIQA. The span at 815–835 shows a compositional bias: gly residues; it reads GRGGRGGGRGRGGGRGGGVPR.

The protein belongs to the eIF-3 subunit C family. Component of the eukaryotic translation initiation factor 3 (eIF-3) complex.

The protein resides in the cytoplasm. In terms of biological role, component of the eukaryotic translation initiation factor 3 (eIF-3) complex, which is involved in protein synthesis of a specialized repertoire of mRNAs and, together with other initiation factors, stimulates binding of mRNA and methionyl-tRNAi to the 40S ribosome. The eIF-3 complex specifically targets and initiates translation of a subset of mRNAs involved in cell proliferation. The protein is Eukaryotic translation initiation factor 3 subunit C of Phaeosphaeria nodorum (strain SN15 / ATCC MYA-4574 / FGSC 10173) (Glume blotch fungus).